Consider the following 205-residue polypeptide: Small ribosomal subunit protein uS4 (205 aa).

The S4 RNA-binding domain occupies 94-157 (SRLDAVVYRA…RNLALVLEAL (64 aa)).

The protein belongs to the universal ribosomal protein uS4 family. In terms of assembly, part of the 30S ribosomal subunit. Contacts protein S5. The interaction surface between S4 and S5 is involved in control of translational fidelity.

One of the primary rRNA binding proteins, it binds directly to 16S rRNA where it nucleates assembly of the body of the 30S subunit. Its function is as follows. With S5 and S12 plays an important role in translational accuracy. The chain is Small ribosomal subunit protein uS4 from Hyphomonas neptunium (strain ATCC 15444).